Here is a 193-residue protein sequence, read N- to C-terminus: Ribonuclease HII (193 aa).

The region spanning 1 to 193 (MTLGIDEAGR…SFALKNNWFS (193 aa)) is the RNase H type-2 domain. Asp6, Glu7, and Asp103 together coordinate a divalent metal cation.

It belongs to the RNase HII family. Requires Mn(2+) as cofactor. The cofactor is Mg(2+).

The protein resides in the cytoplasm. It catalyses the reaction Endonucleolytic cleavage to 5'-phosphomonoester.. Functionally, endonuclease that specifically degrades the RNA of RNA-DNA hybrids. The sequence is that of Ribonuclease HII from Helicobacter acinonychis (strain Sheeba).